A 175-amino-acid polypeptide reads, in one-letter code: Large ribosomal subunit protein uL6 (175 aa).

The protein belongs to the universal ribosomal protein uL6 family. As to quaternary structure, part of the 50S ribosomal subunit.

In terms of biological role, this protein binds to the 23S rRNA, and is important in its secondary structure. It is located near the subunit interface in the base of the L7/L12 stalk, and near the tRNA binding site of the peptidyltransferase center. The chain is Large ribosomal subunit protein uL6 from Xanthomonas axonopodis pv. citri (strain 306).